Reading from the N-terminus, the 460-residue chain is 3-isopropylmalate dehydratase large subunit (460 aa).

[4Fe-4S] cluster is bound by residues Cys338, Cys398, and Cys401.

The protein belongs to the aconitase/IPM isomerase family. LeuC type 1 subfamily. In terms of assembly, heterodimer of LeuC and LeuD. Requires [4Fe-4S] cluster as cofactor.

It carries out the reaction (2R,3S)-3-isopropylmalate = (2S)-2-isopropylmalate. It functions in the pathway amino-acid biosynthesis; L-leucine biosynthesis; L-leucine from 3-methyl-2-oxobutanoate: step 2/4. In terms of biological role, catalyzes the isomerization between 2-isopropylmalate and 3-isopropylmalate, via the formation of 2-isopropylmaleate. The sequence is that of 3-isopropylmalate dehydratase large subunit from Streptococcus thermophilus (strain ATCC BAA-491 / LMD-9).